The following is a 228-amino-acid chain: Biopolymer transport protein exbB1 (228 aa).

A run of 3 helical transmembrane segments spans residues 11 to 31 (LGLMAWPLFICSALTVMLLAE), 116 to 136 (LTLIGVISPLLGLLGTVLGLI), and 158 to 178 (LGVAMYTTAAGLLIAVPAVAG).

This sequence belongs to the ExbB/TolQ family. The accessory proteins ExbB and ExbD seem to form a complex with TonB.

Its subcellular location is the cell inner membrane. In terms of biological role, involved in the TonB-dependent energy-dependent transport of various receptor-bound substrates. Protects ExbD from proteolytic degradation and functionally stabilizes TonB. The polypeptide is Biopolymer transport protein exbB1 (exbB1) (Vibrio cholerae serotype O1 (strain ATCC 39315 / El Tor Inaba N16961)).